The primary structure comprises 205 residues: Heat shock protein beta-11 (205 aa).

The 114-residue stretch at 67 to 180 (VSPMTTFKPI…NERVIPITYT (114 aa)) folds into the sHSP domain. Positions 184 to 205 (KNPALQNSEPENQAVEAEAAEN) are disordered. Over residues 192 to 205 (EPENQAVEAEAAEN) the composition is skewed to low complexity.

The protein belongs to the small heat shock protein (HSP20) family. In terms of tissue distribution, expressed specifically in the rostral-most somites at 24 hpf. At 48 hpf, expression continues in the rostral-most somites and also in the notochord. Somite expression was restricted to the vicinity of the horizontal myoseptum. In adults, expressed in the heart.

This chain is Heat shock protein beta-11 (hspb11), found in Danio rerio (Zebrafish).